The primary structure comprises 52 residues: Large ribosomal subunit protein bL33 (52 aa).

This sequence belongs to the bacterial ribosomal protein bL33 family.

The polypeptide is Large ribosomal subunit protein bL33 (Anaeromyxobacter sp. (strain Fw109-5)).